Reading from the N-terminus, the 151-residue chain is UPF0208 membrane protein YfbV (151 aa).

A run of 2 helical transmembrane segments spans residues 46–65 (YAIRFMPPVAVFTLCWQIAL) and 69–91 (LGPAVATALFALSLPMQGLWWLG).

This sequence belongs to the UPF0208 family.

The protein resides in the cell inner membrane. The sequence is that of UPF0208 membrane protein YfbV from Salmonella choleraesuis (strain SC-B67).